Consider the following 88-residue polypeptide: Large ribosomal subunit protein bL27 (88 aa).

The interval 1 to 21 (MAHKKGASSSRNGRDSAAHRL) is disordered.

Belongs to the bacterial ribosomal protein bL27 family.

In Mycobacterium ulcerans (strain Agy99), this protein is Large ribosomal subunit protein bL27.